The chain runs to 100 residues: Sec-independent protein translocase protein TatA (100 aa).

A helical transmembrane segment spans residues 1–21 (MGALRPWHIAVLVVVLILLFG). Positions 46–58 (LHDDDRDLAEKAD) are enriched in basic and acidic residues. Residues 46 to 100 (LHDDDRDLAEKADAQAGYQPMPPQVQQGQHPQQSPYPAPPQQQPVVDPVQRTRDS) form a disordered region. Over residues 69 to 78 (QVQQGQHPQQ) the composition is skewed to low complexity.

Belongs to the TatA/E family. In terms of assembly, the Tat system comprises two distinct complexes: a TatABC complex, containing multiple copies of TatA, TatB and TatC subunits, and a separate TatA complex, containing only TatA subunits. Substrates initially bind to the TatABC complex, which probably triggers association of the separate TatA complex to form the active translocon.

The protein localises to the cell membrane. Functionally, part of the twin-arginine translocation (Tat) system that transports large folded proteins containing a characteristic twin-arginine motif in their signal peptide across membranes. TatA could form the protein-conducting channel of the Tat system. The protein is Sec-independent protein translocase protein TatA of Salinispora tropica (strain ATCC BAA-916 / DSM 44818 / JCM 13857 / NBRC 105044 / CNB-440).